A 122-amino-acid chain; its full sequence is MHAISQIRLTFNQDRPDHEHDDDGSAGIAVQEAKPALQAPPMYKVVLFNDDYTPMDFVVEVLEVFFNLNRELATKVMLAVHTEGRAVCGVFTRDIAETKAMQVNQYARESQHPLLCEIEKDG.

The protein belongs to the ClpS family. As to quaternary structure, binds to the N-terminal domain of the chaperone ClpA.

Functionally, involved in the modulation of the specificity of the ClpAP-mediated ATP-dependent protein degradation. This Pseudomonas fluorescens (strain SBW25) protein is ATP-dependent Clp protease adapter protein ClpS.